The following is a 355-amino-acid chain: MLISKHEERVKSILSARMENGNLRSRENTQVEFKQSFNKGNIAIYAKTMAAFSNNSGGYIIFGIKDSPRSIIGLQNSNFENIQQEDLTDSINNLFSPSINWELGSFILKEKEINSNGDVIIVQKIIGWIYTEESNIKPVIAQKNNSSEKIVNGDIFYRYRARTEKIKYAEMEQIINCRMKQERDSLFKVFEFIRNNGATNLGIVDYNNGKLSTPYGVDVVLEKNLIAKLLKKAKFIKEGSFSENEGIPVIKVTGNINLAEEVPVPLENLDETYPYIQKQLAEKLNITPQKLYALIWYFKMKESKKYHLEITTSKTNKTHKFSKFALLFLKEKIIELDENKNELNNIISKFNNRKK.

58-65 lines the ATP pocket; the sequence is GYIIFGIK.

This is an uncharacterized protein from Ureaplasma parvum serovar 3 (strain ATCC 700970).